The chain runs to 124 residues: Protein MGF 110-5L (124 aa).

The first 28 residues, 1-28 (MLVIILGVIGLLANQVLGLPTQAGGHLR), serve as a signal peptide directing secretion.

Belongs to the asfivirus MGF 110 family.

In terms of biological role, plays a role in virus cell tropism, and may be required for efficient virus replication in macrophages. The protein is Protein MGF 110-5L of Ornithodoros (relapsing fever ticks).